Reading from the N-terminus, the 317-residue chain is Taste receptor type 2 member 14 (317 aa).

The Extracellular segment spans residues methionine 1 to serine 7. A helical transmembrane segment spans residues isoleucine 8–alanine 28. Residues leucine 29–arginine 55 lie on the Cytoplasmic side of the membrane. A helical membrane pass occupies residues isoleucine 56–phenylalanine 76. At alanine 77–asparagine 87 the chain is on the extracellular side. The cholesterol site is built by threonine 86 and tryptophan 89. Residues isoleucine 88–phenylalanine 108 traverse the membrane as a helical segment. Over leucine 109–valine 129 the chain is Cytoplasmic. The chain crosses the membrane as a helical span at residues valine 130 to isoleucine 150. Over histidine 151 to threonine 184 the chain is Extracellular. Residues asparagine 153, asparagine 162, and asparagine 171 are each glycosylated (N-linked (GlcNAc...) asparagine). A cholesterol-binding site is contributed by valine 180. The helical transmembrane segment at valine 185–leucine 205 threads the bilayer. Residues tryptophan 206–serine 232 lie on the Cytoplasmic side of the membrane. The helical transmembrane segment at valine 233 to threonine 253 threads the bilayer. At serine 254–leucine 261 the chain is on the extracellular side. A helical transmembrane segment spans residues isoleucine 262 to leucine 282. Positions 265 and 268 each coordinate cholesterol. Topologically, residues glycine 283–serine 317 are cytoplasmic.

Belongs to the G-protein coupled receptor T2R family. As to quaternary structure, core component of the TAS2R14-GNAI1 complex, consisting of TAS2R14, GNAI1, GNB1 and GNG2; within the complex interacts with GNAI1. Core component of the TAS2R14-GNAT3 complex, consisting of TAS2R14, GNAT3, GNB1 and GNG2; within the complex interacts with GNAT3. Core component of the TAS2R14-GNAS2 complex, consisting of TAS2R14, GNAS2, GNB1 and GNG2; within the complex interacts with GNAS2.

The protein localises to the membrane. It carries out the reaction Ca(2+)(in) = Ca(2+)(out). The enzyme catalyses 3',5'-cyclic AMP(in) = 3',5'-cyclic AMP(out). Its activity is regulated as follows. Basal activity is enhanced by binding to bitter tastants, such as flufenamic acid and aristolochic acid. Regulated by cholesterol in a concentration-dependent manner. Functionally, gustducin-linked G-protein coupled receptor that plays a role in the perception of bitterness. The activity of this receptor stimulates GNAT3, activating the gustducin G-protein pathway. Likely plays a role in sensing the chemical composition of the gastrointestinal content and other extra-oral tissues via the inhibitory G-protein pathways. The protein is Taste receptor type 2 member 14 (TAS2R14) of Gorilla gorilla gorilla (Western lowland gorilla).